We begin with the raw amino-acid sequence, 260 residues long: NAD-capped RNA hydrolase NudC (260 aa).

A substrate-binding site is contributed by R69. Zn(2+) is bound by residues C98 and C101. E111 is a substrate binding site. Zn(2+)-binding residues include C116 and C119. Residue Y124 coordinates substrate. Residues 125–248 enclose the Nudix hydrolase domain; the sequence is PQIAPCIIVA…TVARRLIEDT (124 aa). Residues A158, E174, and E178 each coordinate a divalent metal cation. The short motif at 159–180 is the Nudix box element; it reads GFVEVGETLEQTVVREVMEESQ. 192–199 contacts substrate; that stretch reads QPWPFPHS. Residue E219 coordinates a divalent metal cation. A241 serves as a coordination point for substrate.

It belongs to the Nudix hydrolase family. NudC subfamily. As to quaternary structure, homodimer. It depends on Mg(2+) as a cofactor. The cofactor is Mn(2+). Zn(2+) serves as cofactor.

It carries out the reaction a 5'-end NAD(+)-phospho-ribonucleoside in mRNA + H2O = a 5'-end phospho-adenosine-phospho-ribonucleoside in mRNA + beta-nicotinamide D-ribonucleotide + 2 H(+). The catalysed reaction is NAD(+) + H2O = beta-nicotinamide D-ribonucleotide + AMP + 2 H(+). It catalyses the reaction NADH + H2O = reduced beta-nicotinamide D-ribonucleotide + AMP + 2 H(+). In terms of biological role, mRNA decapping enzyme that specifically removes the nicotinamide adenine dinucleotide (NAD) cap from a subset of mRNAs by hydrolyzing the diphosphate linkage to produce nicotinamide mononucleotide (NMN) and 5' monophosphate mRNA. The NAD-cap is present at the 5'-end of some mRNAs and stabilizes RNA against 5'-processing. Has preference for mRNAs with a 5'-end purine. Catalyzes the hydrolysis of a broad range of dinucleotide pyrophosphates. The sequence is that of NAD-capped RNA hydrolase NudC from Pectobacterium atrosepticum (strain SCRI 1043 / ATCC BAA-672) (Erwinia carotovora subsp. atroseptica).